We begin with the raw amino-acid sequence, 231 residues long: MMEVFMNFLDQLDLIIQNKHMLEHTFYVKWSKGELTKEQLQAYAKDYYLHIKAFPKYLSAIHSRCDDLEARKLLLDNLMDEENGYPNHIDLWKQFVFALGVTPEELEAHEPSEAAKAKVATFMRWCTGDSLAAGVAALYSYESQIPRIAREKIRGLTEYFGFSNPEDYAYFTEHEEADVRHAREEKALIEMLLKDDADKVLEASQEVTQSLYGFLDSFLDPGTCCSCHQSY.

Fe(2+) is bound by residues Glu81, His88, Glu142, His174, Asp178, and His181.

This sequence belongs to the CADD family. Homodimer. During infection, interacts with death domains of mammalian tumor necrosis factor (TNF) family receptors Fas, DR4, DR5 and to some extent TNFR1, but not with the respective downstream adapters. Fe(2+) is required as a cofactor. Mn(2+) serves as cofactor.

The protein localises to the secreted. Its subcellular location is the host cytoplasm. The protein is a cosubstrate rather than a true enzyme and is left in an inactive state after a single turnover. Inactive under anaerobic conditions. Functionally, involved in de novo para-aminobenzoate (PABA) biosynthesis. Acts as a self-sacrificing or 'suicide' enzyme that utilizes its own active site tyrosine residue(s) as the substrate for PABA synthesis. The side chain of the tyrosine residue is released from the protein backbone via cleavage of the C(alpha)-C(beta) bond, leaving a glycine in place of the original tyrosine residue. Reaction requires O(2) and a reduced dimetal cofactor. Its function is as follows. Was also identified as a specific toxin that associates with death domains of tumor necrosis factor family (TNF) receptors and induces apoptosis in mammalian cell lines through a Caspase-dependent mechanism. This Chlamydia trachomatis serovar D (strain ATCC VR-885 / DSM 19411 / UW-3/Cx) protein is 4-aminobenzoate synthase.